A 199-amino-acid polypeptide reads, in one-letter code: DnaJ homolog subfamily C member 5B (199 aa).

Serine 14 is subject to Phosphoserine. The 66-residue stretch at 19–84 folds into the J domain; the sequence is ALYEILGLHK…SKRSIYDKYG (66 aa).

In terms of assembly, interacts with the chaperone complex consisting of HSC70 and SGTA. Palmitoylated. Palmitoylation is not required for membrane association. As to expression, testis specific.

It is found in the membrane. The chain is DnaJ homolog subfamily C member 5B (DNAJC5B) from Homo sapiens (Human).